An 81-amino-acid chain; its full sequence is Small ribosomal subunit protein bS18 (81 aa).

Belongs to the bacterial ribosomal protein bS18 family. In terms of assembly, part of the 30S ribosomal subunit. Forms a tight heterodimer with protein bS6.

Its function is as follows. Binds as a heterodimer with protein bS6 to the central domain of the 16S rRNA, where it helps stabilize the platform of the 30S subunit. The sequence is that of Small ribosomal subunit protein bS18 from Rubrobacter xylanophilus (strain DSM 9941 / JCM 11954 / NBRC 16129 / PRD-1).